Reading from the N-terminus, the 354-residue chain is Histidinol-phosphate aminotransferase (354 aa).

K210 bears the N6-(pyridoxal phosphate)lysine mark.

The protein belongs to the class-II pyridoxal-phosphate-dependent aminotransferase family. Histidinol-phosphate aminotransferase subfamily. Homodimer. Pyridoxal 5'-phosphate serves as cofactor.

The enzyme catalyses L-histidinol phosphate + 2-oxoglutarate = 3-(imidazol-4-yl)-2-oxopropyl phosphate + L-glutamate. It functions in the pathway amino-acid biosynthesis; L-histidine biosynthesis; L-histidine from 5-phospho-alpha-D-ribose 1-diphosphate: step 7/9. In Clostridium botulinum (strain Kyoto / Type A2), this protein is Histidinol-phosphate aminotransferase.